A 302-amino-acid polypeptide reads, in one-letter code: Acetylglutamate kinase (302 aa).

Substrate-binding positions include 67 to 68 (GG), R89, and N189.

This sequence belongs to the acetylglutamate kinase family. ArgB subfamily.

The protein resides in the cytoplasm. The enzyme catalyses N-acetyl-L-glutamate + ATP = N-acetyl-L-glutamyl 5-phosphate + ADP. Its pathway is amino-acid biosynthesis; L-arginine biosynthesis; N(2)-acetyl-L-ornithine from L-glutamate: step 2/4. Catalyzes the ATP-dependent phosphorylation of N-acetyl-L-glutamate. In Streptomyces clavuligerus, this protein is Acetylglutamate kinase.